The following is a 578-amino-acid chain: Proline--tRNA ligase (578 aa).

Belongs to the class-II aminoacyl-tRNA synthetase family. ProS type 1 subfamily. In terms of assembly, homodimer.

It is found in the cytoplasm. It catalyses the reaction tRNA(Pro) + L-proline + ATP = L-prolyl-tRNA(Pro) + AMP + diphosphate. Functionally, catalyzes the attachment of proline to tRNA(Pro) in a two-step reaction: proline is first activated by ATP to form Pro-AMP and then transferred to the acceptor end of tRNA(Pro). As ProRS can inadvertently accommodate and process non-cognate amino acids such as alanine and cysteine, to avoid such errors it has two additional distinct editing activities against alanine. One activity is designated as 'pretransfer' editing and involves the tRNA(Pro)-independent hydrolysis of activated Ala-AMP. The other activity is designated 'posttransfer' editing and involves deacylation of mischarged Ala-tRNA(Pro). The misacylated Cys-tRNA(Pro) is not edited by ProRS. The chain is Proline--tRNA ligase from Burkholderia vietnamiensis (strain G4 / LMG 22486) (Burkholderia cepacia (strain R1808)).